The following is a 435-amino-acid chain: MLRNTVKRLMTYTFKPSKQTSSFGPSVWLEFSPLAIKYNAVNLGQGFPNFEPPKFVKDAMIKTIEVGGFNQYTRSPGHIRLVKALSSVYSPYFGRELNAMTEIMVGVGASESLFAAISSIVNEGDEVILIEPFFDIYIGPILMAGGIPKFVTLKEEESSQAGSSDKKRSSKHWKINKEELAAAFTDKTKLIILNNPHNPVGKVYSKEELQEIADVVAKHGPNTTVISDEVYEWMTFDGEEHHRFATLPGMWERTITIGSAGKTFSITGWKVGWCIGPSNIIGAIANTHQYVPFSVPTPTQEAVAIALEQPNIKDYFKELATMYQNKRDTLLNSLTQAGLDPVIPQGTYFIMGDTSSIHLQGDQGKDTSITGMGLHLRDWNIARYLTTEYGVTTIPPSAFYCDDHQKIPENFVRFTFCKDDLTLQKAHDNLLKLKK.

The substrate site is built by Gly-46 and Asn-198. Lys-262 carries the N6-(pyridoxal phosphate)lysine modification. Arg-413 is a substrate binding site.

It belongs to the class-I pyridoxal-phosphate-dependent aminotransferase family. In terms of assembly, homodimer. Requires pyridoxal 5'-phosphate as cofactor.

It is found in the cytoplasm. It catalyses the reaction L-kynurenine + 2-oxoglutarate = kynurenate + L-glutamate + H2O. It carries out the reaction 3-phenylpyruvate + L-glutamine = 2-oxoglutaramate + L-phenylalanine. The catalysed reaction is an S-substituted L-cysteine + H2O = a thiol + pyruvate + NH4(+). The protein operates within amino-acid degradation; L-kynurenine degradation; kynurenate from L-kynurenine: step 1/2. Catalyzes the irreversible transamination of the L-tryptophan metabolite L-kynurenine to form kynurenic acid (KA). Metabolizes the cysteine conjugates of certain halogenated alkenes and alkanes to form reactive metabolites. Catalyzes the beta-elimination of S-conjugates and Se-conjugates of L-(seleno)cysteine, resulting in the cleavage of the C-S or C-Se bond. In Dictyostelium discoideum (Social amoeba), this protein is Kynurenine--oxoglutarate transaminase (ccbl).